A 395-amino-acid chain; its full sequence is Putative 8-amino-7-oxononanoate synthase (395 aa).

Arg-23 provides a ligand contact to substrate. Residue 110–111 (GY) coordinates pyridoxal 5'-phosphate. His-135 lines the substrate pocket. Pyridoxal 5'-phosphate is bound by residues Ser-182, 207-210 (DEAH), and 239-242 (TFSK). The residue at position 242 (Lys-242) is an N6-(pyridoxal phosphate)lysine. Substrate is bound at residue Thr-356.

This sequence belongs to the class-II pyridoxal-phosphate-dependent aminotransferase family. BioF subfamily. As to quaternary structure, homodimer. It depends on pyridoxal 5'-phosphate as a cofactor.

The catalysed reaction is 6-carboxyhexanoyl-[ACP] + L-alanine + H(+) = (8S)-8-amino-7-oxononanoate + holo-[ACP] + CO2. It participates in cofactor biosynthesis; biotin biosynthesis. Functionally, catalyzes the decarboxylative condensation of pimeloyl-[acyl-carrier protein] and L-alanine to produce 8-amino-7-oxononanoate (AON), [acyl-carrier protein], and carbon dioxide. The chain is Putative 8-amino-7-oxononanoate synthase (bioF) from Bacillus mycoides (strain KBAB4) (Bacillus weihenstephanensis).